An 83-amino-acid polypeptide reads, in one-letter code: Small ribosomal subunit protein bS16 (83 aa).

It belongs to the bacterial ribosomal protein bS16 family.

The sequence is that of Small ribosomal subunit protein bS16 from Pseudomonas aeruginosa (strain UCBPP-PA14).